The following is a 393-amino-acid chain: Riboflavin biosynthesis protein RibBA (393 aa).

The interval 1 to 200 (MQLDSIDTAL…IEDLEKYRKS (200 aa)) is DHBP synthase. D-ribulose 5-phosphate is bound by residues 27–28 (RE), Asp-32, 139–143 (RRGHT), and Glu-163. A Mg(2+)-binding site is contributed by Glu-28. Position 142 (His-142) interacts with Mg(2+). Residues 201-393 (SISKLDAKAK…TKKEKMGHLI (193 aa)) form a GTP cyclohydrolase II region. GTP is bound at residue 249 to 253 (RIHSA). Cys-254, Cys-265, and Cys-267 together coordinate Zn(2+). GTP-binding positions include Gln-270, 291-293 (EGR), and Thr-313. The Proton acceptor; for GTP cyclohydrolase activity role is filled by Asp-325. Arg-327 (nucleophile; for GTP cyclohydrolase activity) is an active-site residue. 2 residues coordinate GTP: Ser-348 and Lys-353.

This sequence in the N-terminal section; belongs to the DHBP synthase family. It in the C-terminal section; belongs to the GTP cyclohydrolase II family. It depends on Mg(2+) as a cofactor. The cofactor is Mn(2+). Zn(2+) serves as cofactor.

It catalyses the reaction D-ribulose 5-phosphate = (2S)-2-hydroxy-3-oxobutyl phosphate + formate + H(+). The enzyme catalyses GTP + 4 H2O = 2,5-diamino-6-hydroxy-4-(5-phosphoribosylamino)-pyrimidine + formate + 2 phosphate + 3 H(+). It participates in cofactor biosynthesis; riboflavin biosynthesis; 2-hydroxy-3-oxobutyl phosphate from D-ribulose 5-phosphate: step 1/1. It functions in the pathway cofactor biosynthesis; riboflavin biosynthesis; 5-amino-6-(D-ribitylamino)uracil from GTP: step 1/4. In terms of biological role, catalyzes the conversion of D-ribulose 5-phosphate to formate and 3,4-dihydroxy-2-butanone 4-phosphate. Its function is as follows. Catalyzes the conversion of GTP to 2,5-diamino-6-ribosylamino-4(3H)-pyrimidinone 5'-phosphate (DARP), formate and pyrophosphate. The chain is Riboflavin biosynthesis protein RibBA from Staphylococcus saprophyticus subsp. saprophyticus (strain ATCC 15305 / DSM 20229 / NCIMB 8711 / NCTC 7292 / S-41).